Reading from the N-terminus, the 547-residue chain is Methionine--tRNA ligase (547 aa).

The 'HIGH' region signature appears at 15–25 (PYANGSIHIGH). Residues cysteine 146, cysteine 149, cysteine 159, and cysteine 162 each coordinate Zn(2+). The short motif at 332–336 (KLSKS) is the 'KMSKS' region element. Lysine 335 is an ATP binding site.

The protein belongs to the class-I aminoacyl-tRNA synthetase family. MetG type 1 subfamily. As to quaternary structure, monomer. It depends on Zn(2+) as a cofactor.

It localises to the cytoplasm. The enzyme catalyses tRNA(Met) + L-methionine + ATP = L-methionyl-tRNA(Met) + AMP + diphosphate. Is required not only for elongation of protein synthesis but also for the initiation of all mRNA translation through initiator tRNA(fMet) aminoacylation. This is Methionine--tRNA ligase (metG) from Buchnera aphidicola subsp. Acyrthosiphon pisum (strain APS) (Acyrthosiphon pisum symbiotic bacterium).